The chain runs to 473 residues: H(+)/Cl(-) exchange transporter ClcA (473 aa).

Over 1–32 (MNTDTPTFEAQQVVRLRRGDLIRRLLQRDKTP) the chain is Cytoplasmic. The chain crosses the membrane as a helical span at residues 33-69 (LAILLTAAVVGTVTGLIGVAFEKAVTWVQNLRIGALV). At 70 to 76 (QTADYAI) the chain is on the periplasmic side. The helical transmembrane segment at 77–100 (LVWPLAFILSALLAMVGYFLVRKF) threads the bilayer. Topologically, residues 101–108 (APEAGGSG) are cytoplasmic. Residues 106 to 110 (GSGIP) carry the Selectivity filter part_1 motif. Chloride is bound at residue Ser-107. An intramembrane region (helical) is located at residues 109-116 (IPEIEGAL). The Cytoplasmic segment spans residues 117–123 (EELRPVR). A helical transmembrane segment spans residues 124–141 (WWRVLPVKFVGGMGTLGA). Topologically, residues 142-147 (GMVLGR) are periplasmic. A Selectivity filter part_2 motif is present at residues 146–150 (GREGP). Residues 148–166 (EGPTVQIGGNIGRMVLDLF) form a helical membrane-spanning segment. Residues 167–176 (RMRSAEARHT) lie on the Cytoplasmic side of the membrane. 2 intramembrane regions (helical) span residues 177-189 (LLAT…LSAA) and 193-201 (PLAGILFII). The Cytoplasmic portion of the chain corresponds to 202–214 (EEMRPQFRYNLIS). A helical membrane pass occupies residues 215-232 (IKAVFTGVIMSSIVFRIF). The Periplasmic segment spans residues 233–252 (NGEAPIIEVGKLSNAPVNTL). Residues 253–281 (WLYLILGMIFGCVGPLFNHLVLRTQDMFQ) traverse the membrane as a helical segment. At 282–287 (RFHGGE) the chain is on the cytoplasmic side. A helical transmembrane segment spans residues 288–309 (IKKWVLMGGAIGGLCGILGLIE). Topologically, residues 310–329 (PEAAGGGFNLIPIAAAGNYS) are periplasmic. Residues 330-349 (VGLLLFIFIARVLTTLLCFS) form a helical membrane-spanning segment. Over 350–354 (SGAPG) the chain is Cytoplasmic. A Selectivity filter part_3 motif is present at residues 355–359 (GIFAP). Residues 355 to 376 (GIFAPMLALGTLLGTAFGMAAA) form a helical membrane-spanning segment. Residues Ile-356 and Phe-357 each contribute to the chloride site. The Periplasmic portion of the chain corresponds to 377–386 (ACFPQYHLEA). Positions 387–401 (GTFAIAGMGALLAAS) form an intramembrane region, helical. An intramembrane region (note=Loop between two helices) is located at residues 402–404 (VRA). The segment at residues 405 to 416 (PLTGIVLVLEMT) is an intramembrane region (helical). An intramembrane region (note=Loop between two helices) is located at residues 417-421 (DNYQL). A helical transmembrane segment spans residues 422–438 (ILPMIITCLGATLLAQF). The Cytoplasmic portion of the chain corresponds to 439 to 473 (MGGKPLYSTILARTLAKQDAEQAAKSQRSVAGENT). Tyr-445 is a binding site for chloride.

This sequence belongs to the chloride channel (TC 2.A.49) family. ClcA subfamily. As to quaternary structure, homodimer.

It is found in the cell inner membrane. The catalysed reaction is 2 chloride(in) + H(+)(out) = 2 chloride(out) + H(+)(in). Proton-coupled chloride transporter. Functions as antiport system and exchanges two chloride ions for 1 proton. Probably acts as an electrical shunt for an outwardly-directed proton pump that is linked to amino acid decarboxylation, as part of the extreme acid resistance (XAR) response. This is H(+)/Cl(-) exchange transporter ClcA from Citrobacter koseri (strain ATCC BAA-895 / CDC 4225-83 / SGSC4696).